A 502-amino-acid polypeptide reads, in one-letter code: Probable glycine dehydrogenase (decarboxylating) subunit 2 (502 aa).

Lys273 bears the N6-(pyridoxal phosphate)lysine mark.

The protein belongs to the GcvP family. C-terminal subunit subfamily. In terms of assembly, the glycine cleavage system is composed of four proteins: P, T, L and H. In this organism, the P 'protein' is a heterodimer of two subunits. Pyridoxal 5'-phosphate serves as cofactor.

The catalysed reaction is N(6)-[(R)-lipoyl]-L-lysyl-[glycine-cleavage complex H protein] + glycine + H(+) = N(6)-[(R)-S(8)-aminomethyldihydrolipoyl]-L-lysyl-[glycine-cleavage complex H protein] + CO2. The glycine cleavage system catalyzes the degradation of glycine. The P protein binds the alpha-amino group of glycine through its pyridoxal phosphate cofactor; CO(2) is released and the remaining methylamine moiety is then transferred to the lipoamide cofactor of the H protein. This Thermococcus gammatolerans (strain DSM 15229 / JCM 11827 / EJ3) protein is Probable glycine dehydrogenase (decarboxylating) subunit 2.